The following is a 296-amino-acid chain: Glycine N-acyltransferase (296 aa).

At Lys-16 the chain carries N6-acetyllysine; alternate. Position 16 is an N6-succinyllysine; alternate (Lys-16). At Lys-113 the chain carries N6-acetyllysine. Residues Lys-127 and Lys-142 each carry the N6-acetyllysine; alternate modification. Residues Lys-127 and Lys-142 each carry the N6-succinyllysine; alternate modification. The residue at position 159 (Lys-159) is an N6-acetyllysine. Lys-169 is subject to N6-succinyllysine. N6-acetyllysine; alternate occurs at positions 183 and 256. N6-succinyllysine; alternate occurs at positions 183 and 256. Position 267 is an N6-succinyllysine (Lys-267).

It belongs to the glycine N-acyltransferase family.

Its subcellular location is the mitochondrion. The enzyme catalyses an acyl-CoA + glycine = an N-acylglycine + CoA + H(+). The catalysed reaction is benzoyl-CoA + glycine = N-benzoylglycine + CoA + H(+). Mitochondrial acyltransferase which transfers an acyl group to the N-terminus of glycine and glutamine, although much less efficiently. Can conjugate a multitude of substrates to form a variety of N-acylglycines, thereby detoxify xenobiotics, such as benzoic acid or salicylic acid, and endogenous organic acids, such as isovaleric acid. The chain is Glycine N-acyltransferase (Glyat) from Rattus norvegicus (Rat).